The chain runs to 215 residues: Adenylate kinase (215 aa).

10–15 (GAGKGT) is an ATP binding site. The NMP stretch occupies residues 30-59 (STGDILRANVREGTELGLAAKAYMDKGELV). AMP is bound by residues T31, R36, 57-59 (ELV), 85-88 (GYPR), and Q92. The tract at residues 126 to 162 (GRLMCKCGASYHIISNPPKKDNVCDICGGEVFQRADD) is LID. Residue R127 participates in ATP binding. Zn(2+)-binding residues include C130 and C132. 135 to 136 (SY) is an ATP binding site. C149 and C152 together coordinate Zn(2+). 2 residues coordinate AMP: R159 and R170. K198 is an ATP binding site.

It belongs to the adenylate kinase family. As to quaternary structure, monomer.

It is found in the cytoplasm. The enzyme catalyses AMP + ATP = 2 ADP. Its pathway is purine metabolism; AMP biosynthesis via salvage pathway; AMP from ADP: step 1/1. Its function is as follows. Catalyzes the reversible transfer of the terminal phosphate group between ATP and AMP. Plays an important role in cellular energy homeostasis and in adenine nucleotide metabolism. This Methanosarcina acetivorans (strain ATCC 35395 / DSM 2834 / JCM 12185 / C2A) protein is Adenylate kinase.